The following is a 105-amino-acid chain: MSWIILVIAGLLEVVWAVGLKYTHGFSRLTPSVITVTAMIVSMALLAWAMKSLPVGTAYAVWTGIGAVGAAITGIVLLGESANPMRLASLALIVLGIIGLKLSTH.

The chain crosses the membrane as a helical span at residues 1–21; the sequence is MSWIILVIAGLLEVVWAVGLK. Residues 22-28 lie on the Cytoplasmic side of the membrane; sequence YTHGFSR. A helical transmembrane segment spans residues 29–49; sequence LTPSVITVTAMIVSMALLAWA. At 50-57 the chain is on the periplasmic side; it reads MKSLPVGT. The chain crosses the membrane as a helical span at residues 58–78; the sequence is AYAVWTGIGAVGAAITGIVLL. Over 79-81 the chain is Cytoplasmic; it reads GES. A helical membrane pass occupies residues 82-102; sequence ANPMRLASLALIVLGIIGLKL. Residues 103 to 105 are Periplasmic-facing; the sequence is STH.

This sequence belongs to the drug/metabolite transporter (DMT) superfamily. Small multidrug resistance (SMR) (TC 2.A.7.1) family. Gdx/SugE subfamily.

Its subcellular location is the cell inner membrane. Its function is as follows. Guanidinium ion exporter. Couples guanidinium export to the proton motive force, exchanging one guanidinium ion for two protons. The chain is Guanidinium exporter from Escherichia coli O157:H7.